Here is a 284-residue protein sequence, read N- to C-terminus: uncharacterized protein (284 aa).

3 helical membrane passes run 174 to 194 (LFVL…YISI), 217 to 237 (MLIP…PGTA), and 241 to 261 (LIVL…SGSC).

Its subcellular location is the membrane. This is an uncharacterized protein from Saccharomyces cerevisiae (strain ATCC 204508 / S288c) (Baker's yeast).